The primary structure comprises 139 residues: Cytochrome c-551 (139 aa).

The signal sequence occupies residues 1–20 (MTRTLAVVLAMTFSAAPVFA). Residues Cys-34, Cys-37, His-38, and Met-116 each coordinate heme c.

It belongs to the cytochrome c family. In terms of processing, binds 1 heme c group covalently per subunit.

In Roseobacter denitrificans (strain ATCC 33942 / OCh 114) (Erythrobacter sp. (strain OCh 114)), this protein is Cytochrome c-551.